Consider the following 1059-residue polypeptide: Protein OPAQUE10 (1059 aa).

7 tandem repeats follow at residues 269 to 342 (SLLE…KESC), 343 to 416 (SLLE…KESC), 417 to 490 (SPLE…KESC), 491 to 564 (SPLE…KESC), 565 to 638 (FPLE…KESC), 639 to 712 (SPLE…KESC), and 713 to 786 (SPLE…KESC). Positions 269–786 (SLLEPEDSVN…SRPIHDKESC (518 aa)) are 7 X approximate repeats. Residues 511 to 534 (FNDAPNKESEGYGESGRGKHGEKS) are disordered. Residues 515–534 (PNKESEGYGESGRGKHGEKS) are compositionally biased toward basic and acidic residues. Disordered stretches follow at residues 732 to 756 (QYSDGPNEGNEGYGESGHYKHEEKS), 856 to 875 (ETLADHPKKEEAGLQKDTGT), and 889 to 998 (SVCS…SGKG). Residues 858–869 (LADHPKKEEAGL) show a composition bias toward basic and acidic residues. 2 stretches are compositionally biased toward polar residues: residues 907 to 924 (DFSSESHSRLTPTHNTGG) and 945 to 958 (ASDSTNPELNPEAS). Residues 984 to 994 (TRGRPEGDAPR) are compositionally biased toward basic and acidic residues. Residues 1003 to 1023 (VAGGITLVGAVFFMFHLSAAL) traverse the membrane as a helical segment.

Homodimer. Interacts (via N-terminus) with FL1 (via C-terminus), HIP, 19 kDa alpha-zein (AC P06677), 22 kDa alpha-zein (AC O48966), 16 kDa gamma-zein (AC P08031) and 50 kDa gamma-zein (AC C0P381). In terms of tissue distribution, expressed in kernels.

The protein resides in the endoplasmic reticulum membrane. In terms of biological role, cereal endosperm protein required for the ring-shaped distribution of 22 kDa alpha- and 16 kDa gamma-zeins in protein bodies. This Zea mays (Maize) protein is Protein OPAQUE10.